Reading from the N-terminus, the 292-residue chain is Ribosomal RNA small subunit methyltransferase A (292 aa).

N29, L31, G56, E77, D102, and N127 together coordinate S-adenosyl-L-methionine.

Belongs to the class I-like SAM-binding methyltransferase superfamily. rRNA adenine N(6)-methyltransferase family. RsmA subfamily.

The protein resides in the cytoplasm. The catalysed reaction is adenosine(1518)/adenosine(1519) in 16S rRNA + 4 S-adenosyl-L-methionine = N(6)-dimethyladenosine(1518)/N(6)-dimethyladenosine(1519) in 16S rRNA + 4 S-adenosyl-L-homocysteine + 4 H(+). Functionally, specifically dimethylates two adjacent adenosines (A1518 and A1519) in the loop of a conserved hairpin near the 3'-end of 16S rRNA in the 30S particle. May play a critical role in biogenesis of 30S subunits. In Bacillus subtilis (strain 168), this protein is Ribosomal RNA small subunit methyltransferase A.